We begin with the raw amino-acid sequence, 186 residues long: dCTP deaminase (186 aa).

107 to 112 (KSTYAR) serves as a coordination point for dCTP. Glutamate 133 serves as the catalytic Proton donor/acceptor. DCTP contacts are provided by glutamine 152, tyrosine 166, lysine 175, and glutamine 176.

It belongs to the dCTP deaminase family. As to quaternary structure, homotrimer.

The enzyme catalyses dCTP + H2O + H(+) = dUTP + NH4(+). It functions in the pathway pyrimidine metabolism; dUMP biosynthesis; dUMP from dCTP (dUTP route): step 1/2. Catalyzes the deamination of dCTP to dUTP. The chain is dCTP deaminase from Wolinella succinogenes (strain ATCC 29543 / DSM 1740 / CCUG 13145 / JCM 31913 / LMG 7466 / NCTC 11488 / FDC 602W) (Vibrio succinogenes).